Consider the following 380-residue polypeptide: MAPNLRKSHPLLKMINNSLIDLPTPSNISAWWNFGSLLGICLTTQILTGLLLAAHYTADTTLAFSSVAHTCRNVQHGWLIRNLHANGASFFFICIYMHVGRGLYYGSYLYKETWNTGVILLLTLMATAFVGYVLPWGQMSFWGATVITNLFSAIPYIGQTIVEWAWGGFSVDNPTLTRFFTLHFLLPFMIMGLTLIHLTFLHESGSNNPLGIVSNCDKIPFHPYFSLKDILGFMLMFLPLMTLALFSPNLLGDPENFAPANPLVTPPHIKPEWYFLFAYAILRSIPNKLGGVLALAASMLVLFLAPLLHKSKQRTMTFRPLSQLLFWTLTANLLILTWVGSQPVEHPFMIIGQLASLTYFTILLILFPLTGALENKMLNY.

4 helical membrane-spanning segments follow: residues 34-54 (FGSLLGICLTTQILTGLLLAA), 78-99 (WLIRNLHANGASFFFICIYMHV), 114-134 (WNTGVILLLTLMATAFVGYVL), and 179-199 (FFTLHFLLPFMIMGLTLIHLT). Residues His84 and His98 each coordinate heme b. Positions 183 and 197 each coordinate heme b. His202 serves as a coordination point for a ubiquinone. 4 consecutive transmembrane segments (helical) span residues 227 to 247 (LKDILGFMLMFLPLMTLALFS), 289 to 309 (LGGVLALAASMLVLFLAPLLH), 321 to 341 (LSQLLFWTLTANLLILTWVGS), and 348 to 368 (FMIIGQLASLTYFTILLILFP).

Belongs to the cytochrome b family. The cytochrome bc1 complex contains 11 subunits: 3 respiratory subunits (MT-CYB, CYC1 and UQCRFS1), 2 core proteins (UQCRC1 and UQCRC2) and 6 low-molecular weight proteins (UQCRH/QCR6, UQCRB/QCR7, UQCRQ/QCR8, UQCR10/QCR9, UQCR11/QCR10 and a cleavage product of UQCRFS1). This cytochrome bc1 complex then forms a dimer. Heme b serves as cofactor.

Its subcellular location is the mitochondrion inner membrane. Component of the ubiquinol-cytochrome c reductase complex (complex III or cytochrome b-c1 complex) that is part of the mitochondrial respiratory chain. The b-c1 complex mediates electron transfer from ubiquinol to cytochrome c. Contributes to the generation of a proton gradient across the mitochondrial membrane that is then used for ATP synthesis. The sequence is that of Cytochrome b (MT-CYB) from Balearica pavonina (Black crowned-crane).